We begin with the raw amino-acid sequence, 422 residues long: N-acylglucosamine 2-epimerase (422 aa).

Residues 185–206 (LLNLVEQLGEADEELAGISAEL) are leucine-zipper.

The protein belongs to the N-acylglucosamine 2-epimerase family. In terms of assembly, homodimer. Forms a heterodimer with renin and inhibits its activity.

It catalyses the reaction an N-acyl-D-glucosamine = an N-acyl-D-mannosamine. It participates in amino-sugar metabolism; N-acetylneuraminate degradation. Catalyzes the interconversion of N-acetylglucosamine to N-acetylmannosamine. Involved in the N-glycolylneuraminic acid (Neu5Gc) degradation pathway. This is N-acylglucosamine 2-epimerase (RENBP) from Bos taurus (Bovine).